The sequence spans 570 residues: Grayanic acid biosynthesis cluster cytochrome P450 monooxygenase (570 aa).

Residues 9–29 (ILTIFWLPIAAAXLYGAGLAI) traverse the membrane as a helical segment. Asn191 carries N-linked (GlcNAc...) asparagine glycosylation. Cys510 serves as a coordination point for heme.

This sequence belongs to the cytochrome P450 family. Heme serves as cofactor.

It localises to the membrane. Its pathway is secondary metabolite biosynthesis. Functionally, non-reducing polyketide synthase; part of the gene cluster that mediates the biosynthesis of orcinol depsidone grayanic acid (GRA), the only major secondary metabolite known in C.grayi. The first step consists in the ring and depside synthesis by PKS16 leading to 4-O-demethylsphaerophorin, involving different orcinol-like rings, one with acetyl CoA and the other with octanoyl CoA as the starter. Further depsidone formation by the GRA cluster-specific cytochrome P450 leads to 4-O-demethylgrayanic acid. Finally, the cluster specific O-methyltransferase probably converts the 4-O-demethylgrayanic acid into grayanic acid. This is Grayanic acid biosynthesis cluster cytochrome P450 monooxygenase from Cladonia grayi (Gray's cup lichen).